A 364-amino-acid chain; its full sequence is Methylthioribose-1-phosphate isomerase (364 aa).

Residue aspartate 254 is the Proton donor of the active site.

The protein belongs to the eIF-2B alpha/beta/delta subunits family. MtnA subfamily.

It localises to the cytoplasm. The protein localises to the nucleus. It catalyses the reaction 5-(methylsulfanyl)-alpha-D-ribose 1-phosphate = 5-(methylsulfanyl)-D-ribulose 1-phosphate. Its pathway is amino-acid biosynthesis; L-methionine biosynthesis via salvage pathway; L-methionine from S-methyl-5-thio-alpha-D-ribose 1-phosphate: step 1/6. Catalyzes the interconversion of methylthioribose-1-phosphate (MTR-1-P) into methylthioribulose-1-phosphate (MTRu-1-P). The sequence is that of Methylthioribose-1-phosphate isomerase from Drosophila sechellia (Fruit fly).